A 356-amino-acid polypeptide reads, in one-letter code: MKMRTIAKTSLALGLLTTGAITVTTQSVKAEKIQSTKVDKVPTLKAERLAMINITAGANSATTQAANTRQERTPKLEKAPNTNEEKTSASKIEKISQPKQEEQKTLNISATPAPKQEQSQTTTESTTPKTKVTTPPSTNTPQPMQSTKSDTPQSPTIKQAQTDMTPKYEDLRAYYTKPSFEFEKQFGFMLKPWTTVRFMNVIPNRFIYKIALVGKDEKKYKDGPYDNIDVFIVLEDNKYQLKKYSVGGITKTNSKKVNHKVELSITKKDNQGMISRDVSEYMITKEEISLKELDFKLRKQLIEKHNLYGNMGSGTIVIKMKNGGKYTFELHKKLQEHRMADVIDGTNIDNIEVNIK.

Positions 1–30 (MKMRTIAKTSLALGLLTTGAITVTTQSVKA) are cleaved as a signal peptide. The segment at 61-165 (ATTQAANTRQ…TIKQAQTDMT (105 aa)) is disordered. Over residues 69-104 (RQERTPKLEKAPNTNEEKTSASKIEKISQPKQEEQK) the composition is skewed to basic and acidic residues. Over residues 114–141 (PKQEQSQTTTESTTPKTKVTTPPSTNTP) the composition is skewed to low complexity. Polar residues predominate over residues 142–164 (QPMQSTKSDTPQSPTIKQAQTDM). The sialyl Lewis X-binding stretch occupies residues 228 to 326 (IDVFIVLEDN…VIKMKNGGKY (99 aa)).

This sequence belongs to the staphylococcal/streptococcal toxin family. In terms of assembly, interacts with host TLR2 (via its extracellular domain).

Its subcellular location is the secreted. Functionally, secreted protein that plays an essential role in immune innate response inhibition by interacting with and inhibiting host TLR2. In turn, bacteria recognition by immune cells is impaired and cytokine production is inhibited. Mechanistically, by interacting with TLR2, blocks ligand binding and thus inhibits activation. Second, by interacting with an already formed TLR2-lipopeptide complex, prevents TLR heterodimerization and downstream signaling. The interaction with host TLR2 does not involve sialyl Lewis X interactions. This chain is Staphylococcal superantigen-like 3, found in Staphylococcus aureus (strain NCTC 8325 / PS 47).